The chain runs to 192 residues: Holliday junction branch migration complex subunit RuvA (192 aa).

Positions 1–61 (MFEYLKGIVA…DTGITLYGFL (61 aa)) are domain I. Residues 62–137 (SLEDKELFLK…KLGDYVKKSA (76 aa)) are domain II. Residues 137 to 140 (AVAT) form a flexible linker region. Residues 141–192 (DLTPSLQDALLALVALGYTQKEVDRITPKLAKLPENTADGYIKEALALLLKK) are domain III.

The protein belongs to the RuvA family. In terms of assembly, homotetramer. Forms an RuvA(8)-RuvB(12)-Holliday junction (HJ) complex. HJ DNA is sandwiched between 2 RuvA tetramers; dsDNA enters through RuvA and exits via RuvB. An RuvB hexamer assembles on each DNA strand where it exits the tetramer. Each RuvB hexamer is contacted by two RuvA subunits (via domain III) on 2 adjacent RuvB subunits; this complex drives branch migration. In the full resolvosome a probable DNA-RuvA(4)-RuvB(12)-RuvC(2) complex forms which resolves the HJ.

Its subcellular location is the cytoplasm. Functionally, the RuvA-RuvB-RuvC complex processes Holliday junction (HJ) DNA during genetic recombination and DNA repair, while the RuvA-RuvB complex plays an important role in the rescue of blocked DNA replication forks via replication fork reversal (RFR). RuvA specifically binds to HJ cruciform DNA, conferring on it an open structure. The RuvB hexamer acts as an ATP-dependent pump, pulling dsDNA into and through the RuvAB complex. HJ branch migration allows RuvC to scan DNA until it finds its consensus sequence, where it cleaves and resolves the cruciform DNA. The protein is Holliday junction branch migration complex subunit RuvA of Lactobacillus gasseri (strain ATCC 33323 / DSM 20243 / BCRC 14619 / CIP 102991 / JCM 1131 / KCTC 3163 / NCIMB 11718 / NCTC 13722 / AM63).